Consider the following 383-residue polypeptide: MIQLPPTPLHDLNPAFHQEFSSMSWSALHAMPSTTSVGPSLKEVNTFSQHKSHSIFHHGAEIEQQNKFRQEKVIISAPLDYLGSLPGKDIRGKLISAFNEWFKIPEEKLEVIKRVVGLLHVASLLYVHEIQHTHFEPSLTKPSKSLYRIDDIQDSSKLRRGLPVAHNIFGVAQTINSANYAYFRAQSELFTLGKPQALDIFTEELLRLHRGQGMDLYWRDSLICPTEEEYLEMVANKTGGLFRLAIKLIQLESENTMDCVPLVDLLGVIFQIRDDYQNLQSDQYAKNKGFGEDITEGKFSYPIIHSIRKDNGNSQLMNILRQKTEDEDVKRYTIQIIESTGSFEYTRQKLISLTAQARALLKSLGVDQSSGLASILEFLELKQ.

Isopentenyl diphosphate-binding residues include K88, R91, and H120. Mg(2+) contacts are provided by D150 and D154. R159 provides a ligand contact to dimethylallyl diphosphate. Residue R160 participates in isopentenyl diphosphate binding. Dimethylallyl diphosphate-binding residues include K237, T238, and Q271. D274 provides a ligand contact to Mg(2+). Dimethylallyl diphosphate-binding residues include N278, K288, and K298.

This sequence belongs to the FPP/GGPP synthase family. Mg(2+) is required as a cofactor.

The catalysed reaction is isopentenyl diphosphate + dimethylallyl diphosphate = (2E)-geranyl diphosphate + diphosphate. The enzyme catalyses isopentenyl diphosphate + (2E)-geranyl diphosphate = (2E,6E)-farnesyl diphosphate + diphosphate. It catalyses the reaction isopentenyl diphosphate + (2E,6E)-farnesyl diphosphate = (2E,6E,10E)-geranylgeranyl diphosphate + diphosphate. The protein operates within secondary metabolite biosynthesis; terpenoid biosynthesis. Functionally, geranylgeranyl pyrophosphate synthase; part of the cluster that mediates the biosynthesis of shearones, diterpenoid pyrones (DPs) which are structurally diverse meroterpenoids consisting of a diterpene linked by a pyrone, and which may exhibit a range of bioactivities. Within the pathway, esdpD takes part to the biosynthesis of the molecular scaffold by providing geranylgeranyl pyrophosphate (GGPP) to the prenyltransferase esdpC for C-3 geranylgeranylation of the alpha-pyrone. The molecular scaffold is commonly biosynthesized by a series of enzymes including the non-reducing polyketide synthase (NR-PKS) esdpA that generates an alpha-pyrone; the prenyltransferase esdpC that attaches a geranylgeranyl pyrophosphate (GGPP) produced by the GGPP synthase (GGPPS) esdpD onto the pyrone unit; the FAD-dependent monooxygenase esdpE that converts an olefin on the diterpene unit into an epoxide; and the terpene cyclase esdpB that catalyzes the cyclization reactions to give the molecular backbone shearone A. In the modification steps, esdpF oxidizes the hydroxy group to a ketone at C-3 and esdpG then attaches hydroxy groups at both C-11 and C-12. After that, esdpI hydroxylates at C-20 and esdpH hydroxylates at C-6'. The ether bridge is generated by nucleophilic attack of the hydroxy group at C-20 to the carbonyl carbon at C-3. EsdpH can also functions prior to esdpI. The different combinations of these modification enzymes lead to the production of diverse shearone derivatives, shearone I being the end product of the pathway. The alpha-ketoglutarate-dependent dioxygenase esdpJ seems not to be involved in this pathway. The protein is Geranylgeranyl pyrophosphate synthase esdpD of Penicillium shearii (Eupenicillium shearii).